Consider the following 490-residue polypeptide: Membrane-bound lytic murein transglycosylase F (490 aa).

The N-terminal stretch at 1-32 (MFALTAYRLRCAAWLLATGIFLLLAGCSEAKA) is a signal peptide. The non-LT domain stretch occupies residues 33–269 (PTALERVQKE…RLKDRYYGHV (237 aa)). The tract at residues 270 to 490 (DVLGYVGAYT…PEEDSGDEKL (221 aa)) is LT domain. Glu316 is an active-site residue. Residues 467-490 (AESGLHLPGVNKTRPEEDSGDEKL) are disordered. Residues 479 to 490 (TRPEEDSGDEKL) are compositionally biased toward basic and acidic residues.

In the N-terminal section; belongs to the bacterial solute-binding protein 3 family. This sequence in the C-terminal section; belongs to the transglycosylase Slt family.

The protein localises to the cell outer membrane. It catalyses the reaction Exolytic cleavage of the (1-&gt;4)-beta-glycosidic linkage between N-acetylmuramic acid (MurNAc) and N-acetylglucosamine (GlcNAc) residues in peptidoglycan, from either the reducing or the non-reducing ends of the peptidoglycan chains, with concomitant formation of a 1,6-anhydrobond in the MurNAc residue.. Functionally, murein-degrading enzyme that degrades murein glycan strands and insoluble, high-molecular weight murein sacculi, with the concomitant formation of a 1,6-anhydromuramoyl product. Lytic transglycosylases (LTs) play an integral role in the metabolism of the peptidoglycan (PG) sacculus. Their lytic action creates space within the PG sacculus to allow for its expansion as well as for the insertion of various structures such as secretion systems and flagella. The chain is Membrane-bound lytic murein transglycosylase F from Pseudomonas aeruginosa (strain ATCC 15692 / DSM 22644 / CIP 104116 / JCM 14847 / LMG 12228 / 1C / PRS 101 / PAO1).